Consider the following 318-residue polypeptide: Vomeronasal type-1 receptor 45 (318 aa).

Residues 1 to 32 are Extracellular-facing; sequence MSEILFFSPQPLFSHMMNKNSRLHTHSNIKNT. A helical transmembrane segment spans residues 33–53; that stretch reads FFSEIGIGILGNSFLLLFHIL. Residues 54-65 lie on the Cytoplasmic side of the membrane; the sequence is KFIRGHRLRLTD. Residues 66-86 form a helical membrane-spanning segment; sequence LPIGLLSLIHLLMLLLMAFIA. Residues 87 to 109 lie on the Extracellular side of the membrane; that stretch reads TDIFISRRGWDDIICKFLVYLYR. Cysteine 101 and cysteine 188 are joined by a disulfide. A helical membrane pass occupies residues 110-130; the sequence is VLRGLSLCTTSMLSVLQAIIL. Residues 131–150 are Cytoplasmic-facing; that stretch reads SPRSSCLAKLKHKYPHHISC. Residues 151-171 form a helical membrane-spanning segment; sequence AIIFLSVLYMLISSHILLSII. At 172–206 the chain is on the extracellular side; the sequence is ATPNLTRNDFLYVTQSCSILPLSYVMQSMYSTLLA. N-linked (GlcNAc...) asparagine glycosylation occurs at asparagine 175. The helical transmembrane segment at 207–227 threads the bilayer; it reads LREVFLISLMVLSTLYMVVLL. At 228–254 the chain is on the cytoplasmic side; it reads CRHRKQAQHLQGTSLSPKASAEQRATQ. Residues 255-275 traverse the membrane as a helical segment; it reads TILMLMTFFVLMSIFDSIVSC. Residues 276-285 lie on the Extracellular side of the membrane; sequence SRTMFLDDPT. A helical transmembrane segment spans residues 286–306; the sequence is SYSIHIFVMHIYATVSPFVFM. The Cytoplasmic portion of the chain corresponds to 307 to 318; sequence STEKHIVNILRG.

This sequence belongs to the G-protein coupled receptor 1 family. As to expression, expressed in a subset of sensory neurons located in the apical layer of the vomeronasal organ.

Its subcellular location is the cell membrane. In terms of biological role, putative pheromone receptor implicated in the regulation of social and reproductive behavior. This chain is Vomeronasal type-1 receptor 45 (Vmn1r45), found in Mus musculus (Mouse).